A 277-amino-acid polypeptide reads, in one-letter code: 2,3,4,5-tetrahydropyridine-2,6-dicarboxylate N-succinyltransferase (277 aa).

Arginine 106 and aspartate 143 together coordinate substrate.

This sequence belongs to the transferase hexapeptide repeat family. As to quaternary structure, homotrimer.

It is found in the cytoplasm. It catalyses the reaction (S)-2,3,4,5-tetrahydrodipicolinate + succinyl-CoA + H2O = (S)-2-succinylamino-6-oxoheptanedioate + CoA. It functions in the pathway amino-acid biosynthesis; L-lysine biosynthesis via DAP pathway; LL-2,6-diaminopimelate from (S)-tetrahydrodipicolinate (succinylase route): step 1/3. In Xylella fastidiosa (strain 9a5c), this protein is 2,3,4,5-tetrahydropyridine-2,6-dicarboxylate N-succinyltransferase.